Here is a 312-residue protein sequence, read N- to C-terminus: MDAEDGFDPTLLKKKKKKKTTFDLDAALGLEDDTKKEDPQDEASAEGGAAAEEDNLDLESFGKKKKKKKKPFNMDEIEAAIPSFGGDDVAASEEPEEEEINLDMDFSMAKKKKKSKKKELDELFADQADDDKSEDKENDEDNSSTWFGSDRDYTYDELLKRVFEIILDKNPDMAAGRKPKFVMRPPQVLRVGTKKTSFANFMDIAKTLHRLPKHLLDFLLAELGTSGSMDGNQQLIIKGRFQPKQIENVLRRYIKEYVTCHTCRSPETILQKDTRLFFLQCESCGSRCSVASIKSGFQAVTGKRAAIRAKTT.

Disordered stretches follow at residues 26–104 and 125–146; these read AALG…NLDM and ADQA…SSTW. Ser44 carries the phosphoserine modification. Composition is skewed to acidic residues over residues 90–102 and 125–142; these read AASE…EINL and ADQA…DEDN. Ser133 carries the post-translational modification Phosphoserine. A Phosphothreonine modification is found at Thr145. A C4-type zinc finger spans residues 260 to 284; it reads CHTCRSPETILQKDTRLFFLQCESC.

Belongs to the eIF-2-beta/eIF-5 family. In terms of assembly, eukaryotic translation initiation factor 2 eIF2 is a heterotrimeric complex composed of an alpha, a beta and a gamma subunit.

Its subcellular location is the cytoplasm. The protein resides in the cytosol. Functionally, component of the eIF2 complex that functions in the early steps of protein synthesis by forming a ternary complex with GTP and initiator tRNA. This complex binds to a 40S ribosomal subunit, followed by mRNA binding to form a 43S pre-initiation complex (43S PIC). Junction of the 60S ribosomal subunit to form the 80S initiation complex is preceded by hydrolysis of the GTP bound to eIF2 and release of an eIF2-GDP binary complex. In order for eIF2 to recycle and catalyze another round of initiation, the GDP bound to eIF2 must exchange with GTP by way of a reaction catalyzed by eIF2B. In Drosophila melanogaster (Fruit fly), this protein is Eukaryotic translation initiation factor 2 subunit 2.